Consider the following 380-residue polypeptide: Chaperone protein DnaJ (380 aa).

The disordered stretch occupies residues 1–48 (MAKKDYYDTLGVPKNASDDDIKKAYRKLAMKHHPDRNQGDKSKVSEEK). The J domain maps to 5–72 (DYYDTLGVPK…NKRMAYDQYG (68 aa)). Over residues 24-34 (AYRKLAMKHHP) the composition is skewed to basic residues. The segment covering 35-48 (DRNQGDKSKVSEEK) has biased composition (basic and acidic residues). Residues 139 to 217 (GKEAQIRIPS…CHGVGKTKNN (79 aa)) form a CR-type zinc finger. Positions 152, 155, 169, 172, 191, 194, 205, and 208 each coordinate Zn(2+). CXXCXGXG motif repeat units lie at residues 152-159 (CNTCHGSG), 169-176 (CTTCHGHG), 191-198 (CPQCKGTG), and 205-212 (CVACHGVG). Residues 357-380 (KKGGARHSPSEEGWADKLKSFFSA) form a disordered region. A compositionally biased stretch (basic and acidic residues) spans 364 to 380 (SPSEEGWADKLKSFFSA).

This sequence belongs to the DnaJ family. Homodimer. Zn(2+) is required as a cofactor.

The protein localises to the cytoplasm. Functionally, participates actively in the response to hyperosmotic and heat shock by preventing the aggregation of stress-denatured proteins and by disaggregating proteins, also in an autonomous, DnaK-independent fashion. Unfolded proteins bind initially to DnaJ; upon interaction with the DnaJ-bound protein, DnaK hydrolyzes its bound ATP, resulting in the formation of a stable complex. GrpE releases ADP from DnaK; ATP binding to DnaK triggers the release of the substrate protein, thus completing the reaction cycle. Several rounds of ATP-dependent interactions between DnaJ, DnaK and GrpE are required for fully efficient folding. Also involved, together with DnaK and GrpE, in the DNA replication of plasmids through activation of initiation proteins. This Polaromonas sp. (strain JS666 / ATCC BAA-500) protein is Chaperone protein DnaJ.